Consider the following 926-residue polypeptide: Storkhead-box protein 2 (926 aa).

Disordered regions lie at residues 1 to 32, 338 to 393, 452 to 529, 564 to 586, 633 to 693, 723 to 802, and 823 to 926; these read MKKT…RSEK, EEEK…DIPG, EMPF…SYID, KEPS…PSYG, VKKL…SLDK, LLKS…VGTM, and TLLT…VTSV. Residues 18 to 32 show a composition bias toward basic and acidic residues; that stretch reads FSDRASDRMRSRSEK. The segment covering 353-378 has biased composition (basic residues); that stretch reads HSGRSKKSRTHRKSHGKSRSHSKTRV. Residues 379–393 show a composition bias toward basic and acidic residues; the sequence is SKGDPSDGSHLDIPG. Positions 463 to 472 are enriched in basic residues; it reads SHSKVHRSHS. The segment covering 473-495 has biased composition (basic and acidic residues); the sequence is HTQDRRSRNERSNKAKERSRSMD. The span at 518–529 shows a compositional bias: polar residues; sequence QDDQTPSQSYID. Basic and acidic residues-rich tracts occupy residues 633–658 and 684–693; these read VKKL…EESP and HSAEPSSLDK. The segment covering 746 to 769 has biased composition (polar residues); sequence LGTSAAQAMPPSQRQQEPGGNQEA. Over residues 785 to 799 the composition is skewed to basic and acidic residues; the sequence is GANKNAEEEKNRDDV. Composition is skewed to polar residues over residues 847 to 884 and 914 to 926; these read MDSS…QNPA and KPSN…VTSV.

In Mus musculus (Mouse), this protein is Storkhead-box protein 2 (Stox2).